Reading from the N-terminus, the 144-residue chain is Protection of telomeres protein 1c (144 aa).

This sequence belongs to the telombin family. In terms of tissue distribution, expressed at extremely low levels at the limit of detection.

The protein resides in the nucleus. The protein localises to the chromosome. Its subcellular location is the telomere. Binds specifically single-stranded telomeric DNA with weak affinity. Has probably no function in the regulation of telomere length. The sequence is that of Protection of telomeres protein 1c from Arabidopsis thaliana (Mouse-ear cress).